A 328-amino-acid chain; its full sequence is Gonadotropin-releasing hormone receptor (328 aa).

The Extracellular portion of the chain corresponds to Met1–Arg38. Asn18 carries N-linked (GlcNAc...) asparagine glycosylation. A helical transmembrane segment spans residues Val39 to Met58. Residues Lys59–Lys77 are Cytoplasmic-facing. A helical transmembrane segment spans residues Val78–Leu97. Residues Asp98–Lys115 lie on the Extracellular side of the membrane. A glycan (N-linked (GlcNAc...) asparagine) is linked at Asn102. An intrachain disulfide couples Cys114 to Cys196. The chain crosses the membrane as a helical span at residues Ala116–Leu137. The Cytoplasmic portion of the chain corresponds to Asp138–Trp164. Residues Phe165–Glu184 traverse the membrane as a helical segment. The Extracellular portion of the chain corresponds to Asp185–Asn212. N-linked (GlcNAc...) asparagine glycosylation is present at Asn192. Residues Leu213–Ala232 traverse the membrane as a helical segment. Topologically, residues Lys233 to Thr281 are cytoplasmic. A helical membrane pass occupies residues Pro282–Val300. Residues Ser301 to His306 are Extracellular-facing. A helical membrane pass occupies residues Phe307–Phe326. Residues Ser327–Leu328 are Cytoplasmic-facing.

It belongs to the G-protein coupled receptor 1 family.

Its subcellular location is the cell membrane. In terms of biological role, receptor for gonadotropin releasing hormone (GnRH) that mediates the action of GnRH to stimulate the secretion of the gonadotropic hormones luteinizing hormone (LH) and follicle-stimulating hormone (FSH). This receptor mediates its action by association with G-proteins that activate a phosphatidylinositol-calcium second messenger system. The protein is Gonadotropin-releasing hormone receptor (GNRHR) of Trichosurus vulpecula (Brush-tailed possum).